A 419-amino-acid polypeptide reads, in one-letter code: MSRYVFTSESVTEGHPDKICDQVSDAVLDALLAQDSTSRVACETVVNTGLCMITGEVTSKAQVDFIHLVRDVIRDIGYSGARAGGFDATSCAVLVALDQQSPDIAQGVDEADDHAGDPLDKVGAGDQGIMFGYACNETPELMPLPISLAHRLARRLAEVRHNGTLDYLLPDGKTQVSVVYENDKPVEIDTILISTQHTAEVTGLTDEQEVRNRISEDLWTHVVLPATADLPLKPDRANCRYLVNPTGKFVVGGPQGDAGLTGRKIIVDTYGGYARHGGGAFSGKDPTKVDRSAAYAARYVAKALVAAGLANRAEVQLSYAIGVAKPVSILVESFGSGKVSNAELTDLVQEHFDLRPGAIIEQFKLREMPSLNGGRFYRDTAAYGHFGRPDLNLPWEDVGDKAASLKQAEANRIQSGSSL.

Residue His-15 coordinates ATP. Residue Asp-17 coordinates Mg(2+). Glu-43 serves as a coordination point for K(+). L-methionine is bound by residues Glu-56 and Gln-100. The interval 100-110 (QSPDIAQGVDE) is flexible loop. Residues 171–173 (DGK), 248–249 (KF), Asp-257, 263–264 (RK), Ala-280, and Lys-284 each bind ATP. An L-methionine-binding site is contributed by Asp-257. Lys-288 contributes to the L-methionine binding site.

It belongs to the AdoMet synthase family. Homotetramer; dimer of dimers. The cofactor is Mg(2+). It depends on K(+) as a cofactor.

Its subcellular location is the cytoplasm. It carries out the reaction L-methionine + ATP + H2O = S-adenosyl-L-methionine + phosphate + diphosphate. It participates in amino-acid biosynthesis; S-adenosyl-L-methionine biosynthesis; S-adenosyl-L-methionine from L-methionine: step 1/1. Functionally, catalyzes the formation of S-adenosylmethionine (AdoMet) from methionine and ATP. The overall synthetic reaction is composed of two sequential steps, AdoMet formation and the subsequent tripolyphosphate hydrolysis which occurs prior to release of AdoMet from the enzyme. The polypeptide is S-adenosylmethionine synthase (Synechococcus sp. (strain CC9311)).